The primary structure comprises 305 residues: Probable aspartoacylase (305 aa).

The Zn(2+) site is built by His13 and Glu16. Substrate is bound by residues Arg55 and 62–63 (NR). Zn(2+) is bound at residue His105. Positions 163 and 273 each coordinate substrate.

This sequence belongs to the AspA/AstE family. Aspartoacylase subfamily. Zn(2+) is required as a cofactor.

The catalysed reaction is an N-acyl-L-aspartate + H2O = a carboxylate + L-aspartate. The sequence is that of Probable aspartoacylase from Prochlorococcus marinus (strain NATL1A).